A 73-amino-acid chain; its full sequence is Large ribosomal subunit protein bL31 (73 aa).

The protein belongs to the bacterial ribosomal protein bL31 family. Type A subfamily. Part of the 50S ribosomal subunit.

Its function is as follows. Binds the 23S rRNA. The chain is Large ribosomal subunit protein bL31 from Mesorhizobium japonicum (strain LMG 29417 / CECT 9101 / MAFF 303099) (Mesorhizobium loti (strain MAFF 303099)).